The sequence spans 211 residues: Cell division protein SepF (211 aa).

Over residues 15–26 (DTDEVNEVEEEV) the composition is skewed to acidic residues. Positions 15 to 111 (DTDEVNEVEE…ETYQAQTTVQ (97 aa)) are disordered. Composition is skewed to polar residues over residues 44–57 (IPSQ…QNPA), 64–81 (ARSQ…PNRQ), and 91–111 (RESV…TTVQ).

This sequence belongs to the SepF family. Homodimer. Interacts with FtsZ.

Its subcellular location is the cytoplasm. Its function is as follows. Cell division protein that is part of the divisome complex and is recruited early to the Z-ring. Probably stimulates Z-ring formation, perhaps through the cross-linking of FtsZ protofilaments. Its function overlaps with FtsA. The protein is Cell division protein SepF of Streptococcus uberis (strain ATCC BAA-854 / 0140J).